An 805-amino-acid polypeptide reads, in one-letter code: N-(5-amino-5-carboxypentanoyl)-L-cysteinyl-D-valine synthase (805 aa).

Residues 783–805 (PDTGGGAVGSTTTGGVRGELREI) are disordered.

The protein belongs to the ATP-dependent AMP-binding enzyme family. Pantetheine 4'-phosphate serves as cofactor.

The enzyme catalyses L-2-aminoadipate + L-valine + L-cysteine + 3 ATP + H2O = N-[(5S)-5-amino-5-carboxypentanoyl]-L-cysteinyl-D-valine + 3 AMP + 3 diphosphate + 3 H(+). Its pathway is antibiotic biosynthesis; penicillin G biosynthesis; penicillin G from L-alpha-aminoadipate and L-cysteine and L-valine: step 1/3. Its function is as follows. Each of the constituent amino acids of ACV are activated as aminoacyl-adenylates with peptide bonds formed through the participation of amino acid thioester intermediates. The protein is N-(5-amino-5-carboxypentanoyl)-L-cysteinyl-D-valine synthase (pcbAB) of Streptomyces clavuligerus.